The primary structure comprises 332 residues: CXADR-like membrane protein (332 aa).

The N-terminal stretch at 1–19 (MHTLIRSFLGLWYVLGALA) is a signal peptide. Ig-like C2-type domains lie at 20–123 (QTEI…SFIT) and 130–220 (PSEL…VDVT). Residues 20–231 (QTEIKLVADE…QSVSNTGILA (212 aa)) are Extracellular-facing. Intrachain disulfides connect Cys35/Cys109 and Cys151/Cys204. Residue Asn193 is glycosylated (N-linked (GlcNAc...) asparagine). A helical membrane pass occupies residues 232 to 252 (GVACGVVVGVFLIFFTVWLLF). Residues 253-332 (HKKEFKKREE…EQRHHCLEKI (80 aa)) lie on the Cytoplasmic side of the membrane. The tract at residues 276–332 (PKARLVKPGSSSSDSRSSQSGSSSTRSTTNSASRSQRTHSTQETPHGEQRHHCLEKI) is disordered. The segment covering 285 to 310 (SSSSDSRSSQSGSSSTRSTTNSASRS) has biased composition (low complexity). The span at 320 to 332 (PHGEQRHHCLEKI) shows a compositional bias: basic and acidic residues.

The protein resides in the cell junction. It localises to the tight junction. The protein localises to the cell membrane. The protein is CXADR-like membrane protein (clmp) of Xenopus tropicalis (Western clawed frog).